Consider the following 196-residue polypeptide: ATP-dependent Clp protease proteolytic subunit (196 aa).

Ser98 (nucleophile) is an active-site residue. Residue His123 is part of the active site.

It belongs to the peptidase S14 family. As to quaternary structure, fourteen ClpP subunits assemble into 2 heptameric rings which stack back to back to give a disk-like structure with a central cavity, resembling the structure of eukaryotic proteasomes.

The protein resides in the cytoplasm. The catalysed reaction is Hydrolysis of proteins to small peptides in the presence of ATP and magnesium. alpha-casein is the usual test substrate. In the absence of ATP, only oligopeptides shorter than five residues are hydrolyzed (such as succinyl-Leu-Tyr-|-NHMec, and Leu-Tyr-Leu-|-Tyr-Trp, in which cleavage of the -Tyr-|-Leu- and -Tyr-|-Trp bonds also occurs).. Functionally, cleaves peptides in various proteins in a process that requires ATP hydrolysis. Has a chymotrypsin-like activity. Plays a major role in the degradation of misfolded proteins. This Sulfurimonas denitrificans (strain ATCC 33889 / DSM 1251) (Thiomicrospira denitrificans (strain ATCC 33889 / DSM 1251)) protein is ATP-dependent Clp protease proteolytic subunit.